A 155-amino-acid chain; its full sequence is Ribosome maturation factor RimP (155 aa).

The protein belongs to the RimP family.

The protein localises to the cytoplasm. Its function is as follows. Required for maturation of 30S ribosomal subunits. The chain is Ribosome maturation factor RimP from Exiguobacterium sibiricum (strain DSM 17290 / CCUG 55495 / CIP 109462 / JCM 13490 / 255-15).